The following is a 237-amino-acid chain: tRNA (guanine-N(7)-)-methyltransferase (237 aa).

Positions 65, 90, 117, and 140 each coordinate S-adenosyl-L-methionine. Residue D140 is part of the active site. Residues K144, D176, and 212-215 each bind substrate; that span reads TKFE. A disordered region spans residues 197–217; the sequence is TCGPRQFSPRGERPETKFERR. Positions 206–217 are enriched in basic and acidic residues; it reads RGERPETKFERR.

The protein belongs to the class I-like SAM-binding methyltransferase superfamily. TrmB family.

It catalyses the reaction guanosine(46) in tRNA + S-adenosyl-L-methionine = N(7)-methylguanosine(46) in tRNA + S-adenosyl-L-homocysteine. It functions in the pathway tRNA modification; N(7)-methylguanine-tRNA biosynthesis. Catalyzes the formation of N(7)-methylguanine at position 46 (m7G46) in tRNA. This chain is tRNA (guanine-N(7)-)-methyltransferase, found in Alkalilimnicola ehrlichii (strain ATCC BAA-1101 / DSM 17681 / MLHE-1).